The sequence spans 424 residues: Serine hydroxymethyltransferase (424 aa).

Residues L119 and 123 to 125 (GHL) contribute to the (6S)-5,6,7,8-tetrahydrofolate site. Residue K228 is modified to N6-(pyridoxal phosphate)lysine. (6S)-5,6,7,8-tetrahydrofolate is bound at residue 353-355 (SAF).

Belongs to the SHMT family. Homodimer. Pyridoxal 5'-phosphate serves as cofactor.

Its subcellular location is the cytoplasm. The catalysed reaction is (6R)-5,10-methylene-5,6,7,8-tetrahydrofolate + glycine + H2O = (6S)-5,6,7,8-tetrahydrofolate + L-serine. The protein operates within one-carbon metabolism; tetrahydrofolate interconversion. It participates in amino-acid biosynthesis; glycine biosynthesis; glycine from L-serine: step 1/1. Its function is as follows. Catalyzes the reversible interconversion of serine and glycine with tetrahydrofolate (THF) serving as the one-carbon carrier. Also exhibits THF-independent aldolase activity toward beta-hydroxyamino acids, producing glycine and aldehydes, via a retro-aldol mechanism. The sequence is that of Serine hydroxymethyltransferase from Natronomonas pharaonis (strain ATCC 35678 / DSM 2160 / CIP 103997 / JCM 8858 / NBRC 14720 / NCIMB 2260 / Gabara) (Halobacterium pharaonis).